Here is a 135-residue protein sequence, read N- to C-terminus: Large ribosomal subunit protein bL21 (135 aa).

The interval 85–135 is disordered; it reads YRVKRGHRQQYTQIEIESLNANGPASSDDEEAAETSDAEPDEDPEAEPAEA. Polar residues predominate over residues 93–107; sequence QQYTQIEIESLNANG. Acidic residues predominate over residues 111 to 135; sequence SDDEEAAETSDAEPDEDPEAEPAEA.

The protein belongs to the bacterial ribosomal protein bL21 family. As to quaternary structure, part of the 50S ribosomal subunit. Contacts protein L20.

Functionally, this protein binds to 23S rRNA in the presence of protein L20. This chain is Large ribosomal subunit protein bL21, found in Salinibacter ruber (strain DSM 13855 / M31).